We begin with the raw amino-acid sequence, 478 residues long: Protein nucleotidyltransferase YdiU (478 aa).

Residues Gly-84, Gly-86, Arg-87, Lys-107, Asp-119, Gly-120, Arg-170, and Arg-177 each coordinate ATP. Asp-246 functions as the Proton acceptor in the catalytic mechanism. Asn-247 and Asp-256 together coordinate Mg(2+). Asp-256 contacts ATP.

It belongs to the SELO family. Requires Mg(2+) as cofactor. It depends on Mn(2+) as a cofactor.

The catalysed reaction is L-seryl-[protein] + ATP = 3-O-(5'-adenylyl)-L-seryl-[protein] + diphosphate. It carries out the reaction L-threonyl-[protein] + ATP = 3-O-(5'-adenylyl)-L-threonyl-[protein] + diphosphate. The enzyme catalyses L-tyrosyl-[protein] + ATP = O-(5'-adenylyl)-L-tyrosyl-[protein] + diphosphate. It catalyses the reaction L-histidyl-[protein] + UTP = N(tele)-(5'-uridylyl)-L-histidyl-[protein] + diphosphate. The catalysed reaction is L-seryl-[protein] + UTP = O-(5'-uridylyl)-L-seryl-[protein] + diphosphate. It carries out the reaction L-tyrosyl-[protein] + UTP = O-(5'-uridylyl)-L-tyrosyl-[protein] + diphosphate. Functionally, nucleotidyltransferase involved in the post-translational modification of proteins. It can catalyze the addition of adenosine monophosphate (AMP) or uridine monophosphate (UMP) to a protein, resulting in modifications known as AMPylation and UMPylation. In Escherichia coli O81 (strain ED1a), this protein is Protein nucleotidyltransferase YdiU.